Reading from the N-terminus, the 275-residue chain is MASLQTQMISFYLIFLSILLTTIFFFKVNSTETTSFSITKFSPDQQNLIFQGDGYTTKGKLTLTKAVKSTVGRALYSTPIHIWDRDTGSVANFVTSFTFVIDAPSSYNVADGFTFFIAPVDTKPQTGGGYLGVFNSKEYDKTSQTVAVEFDTFYNAAWDPSNKERHIGIDVNSIKSVNTKSWNLQNGERANVVIAFNAATNVLTVTLTYPNSLEEENVTSYTLNEVVPLKDVVPEWVRIGFSATTGAEFAAHEVHSWSFHSELGGTSSSKQAADA.

The signal sequence occupies residues 1 to 30; that stretch reads MASLQTQMISFYLIFLSILLTTIFFFKVNS. Residues aspartate 111 and glycine 129 each coordinate D-glucose. Positions 149 and 151 each coordinate Mn(2+). The Ca(2+) site is built by aspartate 151, phenylalanine 153, asparagine 155, and aspartate 159. The Mn(2+) site is built by aspartate 159 and histidine 166. The propeptide occupies 211–217; sequence NSLEEEN. Residues glycine 246 and alanine 247 each contribute to the D-glucose site. Positions 270–275 are excised as a propeptide; the sequence is KQAADA.

This sequence belongs to the leguminous lectin family. Heterotetramer of two alpha and two beta chains. The mature form consists of two chains, alpha and beta, produced by cleavage of the immature protein. These remain cleaved, yet fold together to form one subunit.

In terms of biological role, D-mannose specific lectin. This is Lectin from Lens culinaris subsp. tomentosus (Lentil).